A 188-amino-acid polypeptide reads, in one-letter code: dCTP deaminase (188 aa).

Residues 111–116 (KSTYAR), 135–137 (TLE), Gln156, Tyr170, and Gln180 contribute to the dCTP site. Glu137 functions as the Proton donor/acceptor in the catalytic mechanism.

This sequence belongs to the dCTP deaminase family. As to quaternary structure, homotrimer.

It carries out the reaction dCTP + H2O + H(+) = dUTP + NH4(+). Its pathway is pyrimidine metabolism; dUMP biosynthesis; dUMP from dCTP (dUTP route): step 1/2. Functionally, catalyzes the deamination of dCTP to dUTP. The chain is dCTP deaminase from Pseudomonas savastanoi pv. phaseolicola (strain 1448A / Race 6) (Pseudomonas syringae pv. phaseolicola (strain 1448A / Race 6)).